The sequence spans 698 residues: Ubiquitin-like modifier-activating enzyme ATG7 (698 aa).

The FAP motif motif lies at 11–13 (FAP). A Glycyl lysine isopeptide (Lys-Gly) (interchain with G-Cter in ubiquitin) cross-link involves residue Lys-41. Cys-567 acts as the Glycyl thioester intermediate in catalysis. Phosphoserine is present on Ser-693.

Belongs to the ATG7 family. As to quaternary structure, homodimer. Interacts with ATG3; this interaction is essential for the transfer of ATG8-like proteins's thioester from ATG7 to ATG3 and plays a role in the conjugation of ATG12 to ATG5. Interacts with ATG12. Forms intermediate conjugates with GABARAPL1. Forms intermediate conjugates with ATG8-like proteins such as GABARAP, GABARAPL2 or MAP1LC3A. Interacts with EP300 acetyltransferase. Interacts with FOXO1. Acetylated by EP300. In terms of processing, polyubiquitinated on Lys-41 via 'Lys-63'-linked ubiquitin by TRIM32; this modification positiely regulates ATG8 and ATG12 activating enzyme activity leading to initiation of autophagy under metabolic stress. Widely expressed.

It is found in the cytoplasm. The protein localises to the preautophagosomal structure. In terms of biological role, E1-like activating enzyme involved in the 2 ubiquitin-like systems required for cytoplasm to vacuole transport (Cvt) and autophagy. Activates ATG12 for its conjugation with ATG5 as well as the ATG8 family proteins for their conjugation with phosphatidylethanolamine. Both systems are needed for the ATG8 association to Cvt vesicles and autophagosomes membranes. Required for autophagic death induced by caspase-8 inhibition. Facilitates LC3-I lipidation with phosphatidylethanolamine to form LC3-II which is found on autophagosomal membranes. Required for mitophagy which contributes to regulate mitochondrial quantity and quality by eliminating the mitochondria to a basal level to fulfill cellular energy requirements and preventing excess ROS production. Modulates p53/TP53 activity to regulate cell cycle and survival during metabolic stress. Also plays a key role in the maintenance of axonal homeostasis, the prevention of axonal degeneration, the maintenance of hematopoietic stem cells, the formation of Paneth cell granules, as well as in adipose differentiation. Plays a role in regulating the liver clock and glucose metabolism by mediating the autophagic degradation of CRY1 (clock repressor) in a time-dependent manner. In Rattus norvegicus (Rat), this protein is Ubiquitin-like modifier-activating enzyme ATG7.